The sequence spans 109 residues: MKDLGGLMKQAQAMQQKLADAQARLAELTVEGTSGGGMVTVTLRGNGELAKVVLDESLIEPGEGEVIADLIVAAHADAKKKLDAQQAQLMQEAAGPMAGMMGGLPGMKF.

Belongs to the YbaB/EbfC family. In terms of assembly, homodimer.

It localises to the cytoplasm. Its subcellular location is the nucleoid. In terms of biological role, binds to DNA and alters its conformation. May be involved in regulation of gene expression, nucleoid organization and DNA protection. This is Nucleoid-associated protein Caul_4574 from Caulobacter sp. (strain K31).